The chain runs to 168 residues: Peptidoglycan-associated lipoprotein (168 aa).

An N-terminal signal peptide occupies residues 1-21 (MEMLKFGKFAALALAMAVAVG). Cys-22 is lipidated: N-palmitoyl cysteine. Cys-22 is lipidated: S-diacylglycerol cysteine. In terms of domain architecture, OmpA-like spans 56 to 168 (SDEAALRAIT…AQNRRVELKK (113 aa)). Residues 147–168 (RPVATGHDEQSWAQNRRVELKK) are disordered.

This sequence belongs to the Pal lipoprotein family. The Tol-Pal system is composed of five core proteins: the inner membrane proteins TolA, TolQ and TolR, the periplasmic protein TolB and the outer membrane protein Pal. They form a network linking the inner and outer membranes and the peptidoglycan layer.

The protein resides in the cell outer membrane. Its function is as follows. Part of the Tol-Pal system, which plays a role in outer membrane invagination during cell division and is important for maintaining outer membrane integrity. This Pseudomonas aeruginosa (strain ATCC 15692 / DSM 22644 / CIP 104116 / JCM 14847 / LMG 12228 / 1C / PRS 101 / PAO1) protein is Peptidoglycan-associated lipoprotein.